Reading from the N-terminus, the 435-residue chain is 5-methylthioadenosine/S-adenosylhomocysteine deaminase (435 aa).

The Zn(2+) site is built by H65 and H67. The substrate site is built by E94, R150, and H189. Residue H216 coordinates Zn(2+). Substrate contacts are provided by E219 and D304. Zn(2+) is bound at residue D304.

It belongs to the metallo-dependent hydrolases superfamily. MTA/SAH deaminase family. Zn(2+) is required as a cofactor.

The catalysed reaction is S-adenosyl-L-homocysteine + H2O + H(+) = S-inosyl-L-homocysteine + NH4(+). It catalyses the reaction S-methyl-5'-thioadenosine + H2O + H(+) = S-methyl-5'-thioinosine + NH4(+). Functionally, catalyzes the deamination of 5-methylthioadenosine and S-adenosyl-L-homocysteine into 5-methylthioinosine and S-inosyl-L-homocysteine, respectively. Is also able to deaminate adenosine. The chain is 5-methylthioadenosine/S-adenosylhomocysteine deaminase from Bacillus cereus (strain ZK / E33L).